Consider the following 514-residue polypeptide: ATP synthase subunit alpha (514 aa).

169–176 serves as a coordination point for ATP; the sequence is GDRQTGKT.

Belongs to the ATPase alpha/beta chains family. As to quaternary structure, F-type ATPases have 2 components, CF(1) - the catalytic core - and CF(0) - the membrane proton channel. CF(1) has five subunits: alpha(3), beta(3), gamma(1), delta(1), epsilon(1). CF(0) has three main subunits: a(1), b(2) and c(9-12). The alpha and beta chains form an alternating ring which encloses part of the gamma chain. CF(1) is attached to CF(0) by a central stalk formed by the gamma and epsilon chains, while a peripheral stalk is formed by the delta and b chains.

The protein localises to the cell membrane. The catalysed reaction is ATP + H2O + 4 H(+)(in) = ADP + phosphate + 5 H(+)(out). In terms of biological role, produces ATP from ADP in the presence of a proton gradient across the membrane. The alpha chain is a regulatory subunit. This is ATP synthase subunit alpha from Buchnera aphidicola subsp. Baizongia pistaciae (strain Bp).